The sequence spans 119 residues: Protein BEX4 (119 aa).

The tract at residues M1–R53 is disordered. Positions A8–E20 are enriched in low complexity. Positions N31 to I89 are interaction with SIRT2. An interaction with alpha-tubulin region spans residues N31–P119. Residue C116 coordinates Zn(2+).

The protein belongs to the BEX family. As to quaternary structure, interacts with alpha-tubulin. Interacts with SIRT2. Post-translationally, ubiquitinated and degraded by the proteasome.

It localises to the cytoplasm. The protein resides in the cytoskeleton. The protein localises to the spindle pole. Its subcellular location is the nucleus. Functionally, may play a role in microtubule deacetylation by negatively regulating the SIRT2 deacetylase activity toward alpha-tubulin and thereby participate in the control of cell cycle progression and genomic stability. In absence of reductive stress, acts as a pseudosubstrate for the CRL2(FEM1B) complex: associates with FEM1B via zinc, thereby preventing association between FEM1B and its substrates. This Pongo abelii (Sumatran orangutan) protein is Protein BEX4.